The chain runs to 224 residues: Heme response regulator HssR (224 aa).

In terms of domain architecture, Response regulatory spans threonine 3–leucine 116. Aspartate 52 is subject to 4-aspartylphosphate. A DNA-binding region (ompR/PhoB-type) is located at residues asparagine 124–aspartate 222.

In terms of processing, phosphorylated by HssS.

The protein resides in the cytoplasm. Functionally, member of the two-component regulatory system HssS/HssR involved in intracellular heme homeostasis and tempering of staphylococcal virulence. Phosphorylated HssR binds to a direct repeat sequence within hrtAB promoter and activates the expression of hrtAB, an efflux pump, in response to extracellular heme, hemin, hemoglobin or blood. The chain is Heme response regulator HssR (hssR) from Staphylococcus saprophyticus subsp. saprophyticus (strain ATCC 15305 / DSM 20229 / NCIMB 8711 / NCTC 7292 / S-41).